A 273-amino-acid chain; its full sequence is NADPH-dependent 7-cyano-7-deazaguanine reductase (273 aa).

81-83 (VES) contacts substrate. 83-84 (SK) lines the NADPH pocket. The active-site Thioimide intermediate is C179. Residue D186 is the Proton donor of the active site. 218–219 (AE) is a binding site for substrate. 247–248 (RG) serves as a coordination point for NADPH.

Belongs to the GTP cyclohydrolase I family. QueF type 2 subfamily. Homodimer.

It localises to the cytoplasm. The enzyme catalyses 7-aminomethyl-7-carbaguanine + 2 NADP(+) = 7-cyano-7-deazaguanine + 2 NADPH + 3 H(+). It functions in the pathway tRNA modification; tRNA-queuosine biosynthesis. In terms of biological role, catalyzes the NADPH-dependent reduction of 7-cyano-7-deazaguanine (preQ0) to 7-aminomethyl-7-deazaguanine (preQ1). The sequence is that of NADPH-dependent 7-cyano-7-deazaguanine reductase from Rickettsia prowazekii (strain Madrid E).